A 97-amino-acid polypeptide reads, in one-letter code: Mitochondrial import inner membrane translocase subunit Tim8 A (97 aa).

Residues 43–66 carry the Twin CX3C motif motif; sequence CWEKCMDKPGPKLDSRAEACFVNC. 2 disulfides stabilise this stretch: C43–C66 and C47–C62. 4 positions are modified to phosphoserine: S57, S87, S94, and S96.

It belongs to the small Tim family. As to quaternary structure, heterohexamer; composed of 3 copies of TIMM8A and 3 copies of TIMM13, named soluble 70 kDa complex. Associates with the TIM22 complex, whose core is composed of TIMM22.

It localises to the mitochondrion inner membrane. In terms of biological role, mitochondrial intermembrane chaperone that participates in the import and insertion of some multi-pass transmembrane proteins into the mitochondrial inner membrane. Also required for the transfer of beta-barrel precursors from the TOM complex to the sorting and assembly machinery (SAM complex) of the outer membrane. Acts as a chaperone-like protein that protects the hydrophobic precursors from aggregation and guide them through the mitochondrial intermembrane space. The TIMM8-TIMM13 complex mediates the import of proteins such as TIMM23, SLC25A12/ARALAR1 and SLC25A13/ARALAR2, while the predominant TIMM9-TIMM10 70 kDa complex mediates the import of much more proteins. The chain is Mitochondrial import inner membrane translocase subunit Tim8 A (TIMM8A) from Bos taurus (Bovine).